We begin with the raw amino-acid sequence, 447 residues long: Cysteine--tRNA ligase (447 aa).

Residue cysteine 28 participates in Zn(2+) binding. Residues proline 30–asparagine 40 carry the 'HIGH' region motif. Zn(2+)-binding residues include cysteine 211, histidine 236, and glutamate 240. The short motif at lysine 268–serine 272 is the 'KMSKS' region element. Lysine 271 contributes to the ATP binding site.

This sequence belongs to the class-I aminoacyl-tRNA synthetase family. Monomer. Requires Zn(2+) as cofactor.

It localises to the cytoplasm. The enzyme catalyses tRNA(Cys) + L-cysteine + ATP = L-cysteinyl-tRNA(Cys) + AMP + diphosphate. The polypeptide is Cysteine--tRNA ligase (Streptococcus agalactiae serotype III (strain NEM316)).